Reading from the N-terminus, the 80-residue chain is Cytochrome c oxidase subunit 7B, mitochondrial (80 aa).

The transit peptide at 1 to 24 (MLPLAKNALSRLQVRSIQQVVARQ) directs the protein to the mitochondrion. At 25–32 (SHQKKTPT) the chain is on the mitochondrial matrix side. The helical transmembrane segment at 33 to 59 (FHDKYGNAVLAGGSIFCISAWTYTATQ) threads the bilayer. The Mitochondrial intermembrane portion of the chain corresponds to 60–80 (IGIEWNLSPVGRVTPKEWRDQ).

The protein belongs to the cytochrome c oxidase VIIb family. As to quaternary structure, component of the cytochrome c oxidase (complex IV, CIV), a multisubunit enzyme composed of 14 subunits. The complex is composed of a catalytic core of 3 subunits MT-CO1, MT-CO2 and MT-CO3, encoded in the mitochondrial DNA, and 11 supernumerary subunits COX4I, COX5A, COX5B, COX6A, COX6B, COX6C, COX7A, COX7B, COX7C, COX8 and NDUFA4, which are encoded in the nuclear genome. The complex exists as a monomer or a dimer and forms supercomplexes (SCs) in the inner mitochondrial membrane with NADH-ubiquinone oxidoreductase (complex I, CI) and ubiquinol-cytochrome c oxidoreductase (cytochrome b-c1 complex, complex III, CIII), resulting in different assemblies (supercomplex SCI(1)III(2)IV(1) and megacomplex MCI(2)III(2)IV(2)).

Its subcellular location is the mitochondrion inner membrane. Its pathway is energy metabolism; oxidative phosphorylation. Its function is as follows. Component of the cytochrome c oxidase, the last enzyme in the mitochondrial electron transport chain which drives oxidative phosphorylation. The respiratory chain contains 3 multisubunit complexes succinate dehydrogenase (complex II, CII), ubiquinol-cytochrome c oxidoreductase (cytochrome b-c1 complex, complex III, CIII) and cytochrome c oxidase (complex IV, CIV), that cooperate to transfer electrons derived from NADH and succinate to molecular oxygen, creating an electrochemical gradient over the inner membrane that drives transmembrane transport and the ATP synthase. Cytochrome c oxidase is the component of the respiratory chain that catalyzes the reduction of oxygen to water. Electrons originating from reduced cytochrome c in the intermembrane space (IMS) are transferred via the dinuclear copper A center (CU(A)) of subunit 2 and heme A of subunit 1 to the active site in subunit 1, a binuclear center (BNC) formed by heme A3 and copper B (CU(B)). The BNC reduces molecular oxygen to 2 water molecules using 4 electrons from cytochrome c in the IMS and 4 protons from the mitochondrial matrix. Plays a role in proper central nervous system (CNS) development in vertebrates. The polypeptide is Cytochrome c oxidase subunit 7B, mitochondrial (Cox7b) (Rattus norvegicus (Rat)).